Here is a 388-residue protein sequence, read N- to C-terminus: Ferrochelatase (388 aa).

Positions 196 and 277 each coordinate Fe cation.

Belongs to the ferrochelatase family.

The protein resides in the cytoplasm. The enzyme catalyses heme b + 2 H(+) = protoporphyrin IX + Fe(2+). It participates in porphyrin-containing compound metabolism; protoheme biosynthesis; protoheme from protoporphyrin-IX: step 1/1. Its function is as follows. Catalyzes the ferrous insertion into protoporphyrin IX. The polypeptide is Ferrochelatase (Nostoc punctiforme (strain ATCC 29133 / PCC 73102)).